A 325-amino-acid polypeptide reads, in one-letter code: Tetraacyldisaccharide 4'-kinase (325 aa).

55-62 (TAGGNGKT) is an ATP binding site.

It belongs to the LpxK family.

It catalyses the reaction a lipid A disaccharide + ATP = a lipid IVA + ADP + H(+). It participates in glycolipid biosynthesis; lipid IV(A) biosynthesis; lipid IV(A) from (3R)-3-hydroxytetradecanoyl-[acyl-carrier-protein] and UDP-N-acetyl-alpha-D-glucosamine: step 6/6. Transfers the gamma-phosphate of ATP to the 4'-position of a tetraacyldisaccharide 1-phosphate intermediate (termed DS-1-P) to form tetraacyldisaccharide 1,4'-bis-phosphate (lipid IVA). The sequence is that of Tetraacyldisaccharide 4'-kinase from Citrobacter koseri (strain ATCC BAA-895 / CDC 4225-83 / SGSC4696).